Here is a 123-residue protein sequence, read N- to C-terminus: Probable histone H2B 3 (123 aa).

Positions 1–31 (MAPPKPSAKGAKKAAKTVSKPKDGKKRKHAR) are disordered. Ser110 carries O-linked (GlcNAc) serine glycosylation. A Glycyl lysine isopeptide (Lys-Gly) (interchain with G-Cter in ubiquitin) cross-link involves residue Lys118.

This sequence belongs to the histone H2B family. As to quaternary structure, the nucleosome is a histone octamer containing two molecules each of H2A, H2B, H3 and H4 assembled in one H3-H4 heterotetramer and two H2A-H2B heterodimers. The octamer wraps approximately 147 bp of DNA. Monoubiquitination of Lys-118 gives a specific tag for epigenetic transcriptional activation and is also prerequisite for histone H3 'Lys-4' and 'Lys-79' methylation. Post-translationally, glcNAcylation at Ser-110 promotes monoubiquitination of Lys-118. It fluctuates in response to extracellular glucose, and associates with transcribed genes.

The protein resides in the nucleus. It localises to the chromosome. Its function is as follows. Core component of nucleosome. Nucleosomes wrap and compact DNA into chromatin, limiting DNA accessibility to the cellular machineries which require DNA as a template. Histones thereby play a central role in transcription regulation, DNA repair, DNA replication and chromosomal stability. DNA accessibility is regulated via a complex set of post-translational modifications of histones, also called histone code, and nucleosome remodeling. This is Probable histone H2B 3 (his-41) from Caenorhabditis elegans.